The chain runs to 673 residues: DNA ligase (673 aa).

Residues 36 to 40 (DSEYD), 85 to 86 (SL), and E118 contribute to the NAD(+) site. K120 (N6-AMP-lysine intermediate) is an active-site residue. Residues R141, E178, K295, and K319 each contribute to the NAD(+) site. Zn(2+) is bound by residues C413, C416, C431, and C437. The 78-residue stretch at 596-673 (VRDNPLKGKT…SENEFLALLA (78 aa)) folds into the BRCT domain.

Belongs to the NAD-dependent DNA ligase family. LigA subfamily. Requires Mg(2+) as cofactor. Mn(2+) serves as cofactor.

It catalyses the reaction NAD(+) + (deoxyribonucleotide)n-3'-hydroxyl + 5'-phospho-(deoxyribonucleotide)m = (deoxyribonucleotide)n+m + AMP + beta-nicotinamide D-nucleotide.. DNA ligase that catalyzes the formation of phosphodiester linkages between 5'-phosphoryl and 3'-hydroxyl groups in double-stranded DNA using NAD as a coenzyme and as the energy source for the reaction. It is essential for DNA replication and repair of damaged DNA. The chain is DNA ligase from Histophilus somni (strain 129Pt) (Haemophilus somnus).